We begin with the raw amino-acid sequence, 791 residues long: Protein SEY1 (791 aa).

At 1–685 (MSEDGASKCQ…KRSTIKSHTH (685 aa)) the chain is on the cytoplasmic side. The GB1/RHD3-type G domain occupies 40-268 (GLDYHVISVF…REDYYLSGKY (229 aa)). 50 to 57 (GSQSSGKS) is a binding site for GTP. Residues 686-706 (IPMWIYAIIAVLGWNEFMLVL) traverse the membrane as a helical segment. Residues 707–709 (RNP) lie on the Lumenal side of the membrane. A helical transmembrane segment spans residues 710–730 (LFIALMLLIVGAAYTVHRLNL). Topologically, residues 731 to 791 (WTPLATFASA…NETKENANES (61 aa)) are cytoplasmic. A disordered region spans residues 763-791 (PKNASSKPVESFEMQDLSVNETKENANES).

Belongs to the TRAFAC class dynamin-like GTPase superfamily. GB1/RHD3 GTPase family. RHD3 subfamily.

It localises to the endoplasmic reticulum membrane. In terms of biological role, cooperates with the reticulon proteins and tubule-shaping DP1 family proteins to generate and maintain the structure of the tubular endoplasmic reticulum network. Has GTPase activity, which is required for its function in ER organization. The polypeptide is Protein SEY1 (Eremothecium gossypii (strain ATCC 10895 / CBS 109.51 / FGSC 9923 / NRRL Y-1056) (Yeast)).